The chain runs to 520 residues: Pentatricopeptide repeat-containing protein At1g28690, mitochondrial (520 aa).

Residues 1-19 constitute a mitochondrion transit peptide; that stretch reads MRIFRFTSISPRILPSNHY. PPR repeat units follow at residues 68 to 98, 99 to 133, 134 to 168, 174 to 208, 209 to 235, 236 to 271, 272 to 306, 307 to 337, 338 to 372, 373 to 403, and 409 to 439; these read DLNI…LPKP, TLSA…GEKA, DGYT…RIIK, DDVL…NVVC, CTSM…TKVK, DIVV…GFHP, NIST…GVYT, HIKM…MQEK, NVFS…RIEP, NYVT…MQRD, and KMEH…MPER. A type E motif region spans residues 444–520; that stretch reads IWAALLSSCN…TIGRSWTSED (77 aa).

The protein belongs to the PPR family. PCMP-E subfamily.

Its subcellular location is the mitochondrion. The chain is Pentatricopeptide repeat-containing protein At1g28690, mitochondrial (PCMP-E34) from Arabidopsis thaliana (Mouse-ear cress).